A 102-amino-acid chain; its full sequence is Large ribosomal subunit protein bL21 (102 aa).

Positions 79-91 (RKDSKRKKGHRQP) are enriched in basic residues. The segment at 79–102 (RKDSKRKKGHRQPYTKLTIDKINA) is disordered.

Belongs to the bacterial ribosomal protein bL21 family. Part of the 50S ribosomal subunit. Contacts protein L20.

Its function is as follows. This protein binds to 23S rRNA in the presence of protein L20. In Staphylococcus carnosus (strain TM300), this protein is Large ribosomal subunit protein bL21.